The chain runs to 258 residues: Regulatory protein RecX (258 aa).

This sequence belongs to the RecX family.

It is found in the cytoplasm. Modulates RecA activity. This is Regulatory protein RecX from Streptococcus agalactiae serotype Ia (strain ATCC 27591 / A909 / CDC SS700).